A 607-amino-acid polypeptide reads, in one-letter code: Elongation factor 4 (607 aa).

The region spanning 11–193 (GKIRNFSIIA…QIVEKVPAPT (183 aa)) is the tr-type G domain. Residues 23–28 (DHGKST) and 140–143 (NKID) contribute to the GTP site.

The protein belongs to the TRAFAC class translation factor GTPase superfamily. Classic translation factor GTPase family. LepA subfamily.

It is found in the cell membrane. The enzyme catalyses GTP + H2O = GDP + phosphate + H(+). Its function is as follows. Required for accurate and efficient protein synthesis under certain stress conditions. May act as a fidelity factor of the translation reaction, by catalyzing a one-codon backward translocation of tRNAs on improperly translocated ribosomes. Back-translocation proceeds from a post-translocation (POST) complex to a pre-translocation (PRE) complex, thus giving elongation factor G a second chance to translocate the tRNAs correctly. Binds to ribosomes in a GTP-dependent manner. In Streptococcus pneumoniae (strain Taiwan19F-14), this protein is Elongation factor 4.